Consider the following 261-residue polypeptide: Cytochrome c oxidase subunit 3 (261 aa).

At 1–15 (MTHQTHAYHMVNPSP) the chain is on the mitochondrial matrix side. A helical membrane pass occupies residues 16 to 34 (WPLTGALSALLMTSGLIMW). Topologically, residues 35–40 (FHFNST) are mitochondrial intermembrane. Residues 41 to 66 (TLLMLGLTTNMLTMYQWWRDVIREST) form a helical membrane-spanning segment. The Mitochondrial matrix segment spans residues 67-72 (FQGHHT). A helical transmembrane segment spans residues 73-105 (PNVQKGLRYGMILFIISEVLFFTGFFWAFYHSS). Residues 106-128 (LAPTPELGGCWPPTGIHPLNPLE) lie on the Mitochondrial intermembrane side of the membrane. A helical transmembrane segment spans residues 129–152 (VPLLNTSVLLASGVSITWAHHSLM). Over 153-155 (EGN) the chain is Mitochondrial matrix. The chain crosses the membrane as a helical span at residues 156 to 183 (RNHMLQALFITIALGVYFTLLQASEYYE). Residues 184 to 190 (APFTISD) lie on the Mitochondrial intermembrane side of the membrane. Residues 191-223 (GVYGSTFFVATGFHGLHVIIGSTFLIVCFFRQL) form a helical membrane-spanning segment. Residues 224-232 (KFHFTSNHH) are Mitochondrial matrix-facing. The helical transmembrane segment at 233–256 (FGFEAAAWYWHFVDVVWLFLYVSI) threads the bilayer. The Mitochondrial intermembrane segment spans residues 257–261 (YWWGS).

Belongs to the cytochrome c oxidase subunit 3 family. As to quaternary structure, component of the cytochrome c oxidase (complex IV, CIV), a multisubunit enzyme composed of 14 subunits. The complex is composed of a catalytic core of 3 subunits MT-CO1, MT-CO2 and MT-CO3, encoded in the mitochondrial DNA, and 11 supernumerary subunits COX4I, COX5A, COX5B, COX6A, COX6B, COX6C, COX7A, COX7B, COX7C, COX8 and NDUFA4, which are encoded in the nuclear genome. The complex exists as a monomer or a dimer and forms supercomplexes (SCs) in the inner mitochondrial membrane with NADH-ubiquinone oxidoreductase (complex I, CI) and ubiquinol-cytochrome c oxidoreductase (cytochrome b-c1 complex, complex III, CIII), resulting in different assemblies (supercomplex SCI(1)III(2)IV(1) and megacomplex MCI(2)III(2)IV(2)).

The protein resides in the mitochondrion inner membrane. It carries out the reaction 4 Fe(II)-[cytochrome c] + O2 + 8 H(+)(in) = 4 Fe(III)-[cytochrome c] + 2 H2O + 4 H(+)(out). Its function is as follows. Component of the cytochrome c oxidase, the last enzyme in the mitochondrial electron transport chain which drives oxidative phosphorylation. The respiratory chain contains 3 multisubunit complexes succinate dehydrogenase (complex II, CII), ubiquinol-cytochrome c oxidoreductase (cytochrome b-c1 complex, complex III, CIII) and cytochrome c oxidase (complex IV, CIV), that cooperate to transfer electrons derived from NADH and succinate to molecular oxygen, creating an electrochemical gradient over the inner membrane that drives transmembrane transport and the ATP synthase. Cytochrome c oxidase is the component of the respiratory chain that catalyzes the reduction of oxygen to water. Electrons originating from reduced cytochrome c in the intermembrane space (IMS) are transferred via the dinuclear copper A center (CU(A)) of subunit 2 and heme A of subunit 1 to the active site in subunit 1, a binuclear center (BNC) formed by heme A3 and copper B (CU(B)). The BNC reduces molecular oxygen to 2 water molecules using 4 electrons from cytochrome c in the IMS and 4 protons from the mitochondrial matrix. This is Cytochrome c oxidase subunit 3 (MT-CO3) from Antilope cervicapra (Blackbuck).